A 474-amino-acid chain; its full sequence is Glycogen synthase (474 aa).

ADP-alpha-D-glucose is bound at residue K15.

The protein belongs to the glycosyltransferase 1 family. Bacterial/plant glycogen synthase subfamily.

The catalysed reaction is [(1-&gt;4)-alpha-D-glucosyl](n) + ADP-alpha-D-glucose = [(1-&gt;4)-alpha-D-glucosyl](n+1) + ADP + H(+). It participates in glycan biosynthesis; glycogen biosynthesis. In terms of biological role, synthesizes alpha-1,4-glucan chains using ADP-glucose. The protein is Glycogen synthase of Finegoldia magna (strain ATCC 29328 / DSM 20472 / WAL 2508) (Peptostreptococcus magnus).